The sequence spans 79 residues: Acyl carrier protein (79 aa).

Residues 1 to 79 (MTKEQILVDV…DVVSYIETQV (79 aa)) enclose the Carrier domain. Position 39 is an O-(pantetheine 4'-phosphoryl)serine (serine 39).

Belongs to the acyl carrier protein (ACP) family. 4'-phosphopantetheine is transferred from CoA to a specific serine of apo-ACP by AcpS. This modification is essential for activity because fatty acids are bound in thioester linkage to the sulfhydryl of the prosthetic group.

It localises to the cytoplasm. It functions in the pathway lipid metabolism; fatty acid biosynthesis. Carrier of the growing fatty acid chain in fatty acid biosynthesis. This Exiguobacterium sibiricum (strain DSM 17290 / CCUG 55495 / CIP 109462 / JCM 13490 / 255-15) protein is Acyl carrier protein.